Consider the following 480-residue polypeptide: 3,6-anhydro-alpha-L-galactose dehydrogenase (480 aa).

Residues 149-150 (WN), 173-176 (KPTS), and 226-227 (GS) contribute to the NADP(+) site. Glu248 (proton acceptor) is an active-site residue. Leu249 serves as a coordination point for NADP(+). The active-site Nucleophile is the Cys282. Glu383 contacts NADP(+).

Belongs to the aldehyde dehydrogenase family.

It carries out the reaction 3,6-anhydro-alpha-L-galactopyranose + NADP(+) + H2O = 3,6-anhydro-L-galactonate + NADPH + 2 H(+). The enzyme catalyses 3,6-anhydro-alpha-L-galactopyranose + NAD(+) + H2O = 3,6-anhydro-L-galactonate + NADH + 2 H(+). In terms of biological role, involved in the degradation of 3,6-anhydro-L-galactose, which is the major monomeric sugar of red macroalgae. Catalyzes the oxidation of 3,6-anhydro-L-galactose (AHG) to form 3,6-anhydrogalactonate (AHGA). In Vibrio sp. (strain EJY3), this protein is 3,6-anhydro-alpha-L-galactose dehydrogenase.